The chain runs to 244 residues: Protein DMP9 (244 aa).

The segment at 1 to 56 is disordered; it reads MEKTEESVGIRVYTATPPQKPSPSPPSRSPKPVLISSLPSLPSGAAAGGGRGRKRR. Residues 18–29 show a composition bias toward pro residues; sequence PQKPSPSPPSRS. Over residues 30 to 45 the composition is skewed to low complexity; it reads PKPVLISSLPSLPSGA. Helical transmembrane passes span 71–91, 99–119, 173–193, and 213–233; these read MLVNFLPTGTLLMFEMVLPSI, GINTLMIHLLLLLCAMSCFFF, LTVNDFVHAVMSVLVFMAIAF, and VMESFPIMVGIVCSALFLVFP.

This sequence belongs to the plant DMP1 protein family. Restricted to flowers and pollen.

The protein resides in the endoplasmic reticulum membrane. Its subcellular location is the vacuole membrane. Its function is as follows. Involved in membrane remodeling. The protein is Protein DMP9 of Arabidopsis thaliana (Mouse-ear cress).